Consider the following 345-residue polypeptide: Fructose-bisphosphate aldolase (345 aa).

A D-glyceraldehyde 3-phosphate-binding site is contributed by Ser-53. Asp-95 serves as the catalytic Proton donor. Zn(2+) is bound by residues His-96, Asp-131, Glu-161, and His-212. Gly-213 provides a ligand contact to dihydroxyacetone phosphate. His-252 serves as a coordination point for Zn(2+). Dihydroxyacetone phosphate contacts are provided by residues 253-255 (GGS) and 274-277 (NVDT).

It belongs to the class II fructose-bisphosphate aldolase family. Zn(2+) serves as cofactor.

The catalysed reaction is beta-D-fructose 1,6-bisphosphate = D-glyceraldehyde 3-phosphate + dihydroxyacetone phosphate. It functions in the pathway carbohydrate degradation; glycolysis; D-glyceraldehyde 3-phosphate and glycerone phosphate from D-glucose: step 4/4. Catalyzes the aldol condensation of dihydroxyacetone phosphate (DHAP or glycerone-phosphate) with glyceraldehyde 3-phosphate (G3P) to form fructose 1,6-bisphosphate (FBP) in gluconeogenesis and the reverse reaction in glycolysis. This chain is Fructose-bisphosphate aldolase (fba), found in Mycobacterium leprae (strain TN).